The sequence spans 179 residues: Large ribosomal subunit protein uL5 (179 aa).

It belongs to the universal ribosomal protein uL5 family. As to quaternary structure, part of the 50S ribosomal subunit; part of the 5S rRNA/L5/L18/L25 subcomplex. Contacts the 5S rRNA and the P site tRNA. Forms a bridge to the 30S subunit in the 70S ribosome.

This is one of the proteins that bind and probably mediate the attachment of the 5S RNA into the large ribosomal subunit, where it forms part of the central protuberance. In the 70S ribosome it contacts protein S13 of the 30S subunit (bridge B1b), connecting the 2 subunits; this bridge is implicated in subunit movement. Contacts the P site tRNA; the 5S rRNA and some of its associated proteins might help stabilize positioning of ribosome-bound tRNAs. The sequence is that of Large ribosomal subunit protein uL5 from Haemophilus ducreyi (strain 35000HP / ATCC 700724).